Reading from the N-terminus, the 582-residue chain is Protein alan shepard (582 aa).

The span at 1-12 shows a compositional bias: pro residues; it reads MHPRYSPAPPPQ. The segment at 1–73 is disordered; it reads MHPRYSPAPP…AAPPTSRSAF (73 aa). The residue at position 5 (Tyr-5) is a Phosphotyrosine. Residues 13–24 show a composition bias toward low complexity; sequence QQQQMGGPLHQQ. Positions 25–36 are enriched in gly residues; the sequence is QGGGGGGGGGIR. Residues 39-57 show a composition bias toward polar residues; sequence SNAQQLPPQIPRSQNYSNG. Residues 58-72 show a composition bias toward low complexity; that stretch reads SSSSAAAAPPTSRSA. Phosphotyrosine occurs at positions 125 and 142. The interval 164 to 225 is disordered; the sequence is PATTTYGQRV…TVQNQNQQGG (62 aa). The span at 178-225 shows a compositional bias: low complexity; it reads SPSNTNSSSSSNTGSQSGTLSTSLSNTTNTNTNMGPNGTVQNQNQQGG. 2 RRM domains span residues 231–304 and 310–389; these read TNLY…MAKQ and TNLY…FADG. A disordered region spans residues 555–582; that stretch reads PMTDSEQASTAASPDEAYTQYPHQAAPK.

Its function is as follows. Has a role in the perception of gravity. The sequence is that of Protein alan shepard from Drosophila yakuba (Fruit fly).